A 268-amino-acid chain; its full sequence is Fibroblast growth factor 5 (268 aa).

A signal peptide spans Met1–Ala20. Positions Leu26–Trp81 are disordered. Low complexity predominate over residues Gly43–Gln80. A glycan (N-linked (GlcNAc...) asparagine) is linked at Asn110. The tract at residues Val233–Asn255 is disordered.

This sequence belongs to the heparin-binding growth factors family. In terms of assembly, interacts with FGFR1 and FGFR2. Affinity between fibroblast growth factors (FGFs) and their receptors is increased by heparan sulfate glycosaminoglycans that function as coreceptors. In terms of tissue distribution, expressed in neonatal brain.

Its subcellular location is the secreted. Functionally, plays an important role in the regulation of cell proliferation and cell differentiation. Required for normal regulation of the hair growth cycle. Functions as an inhibitor of hair elongation by promoting progression from anagen, the growth phase of the hair follicle, into catagen the apoptosis-induced regression phase. The protein is Fibroblast growth factor 5 (FGF5) of Homo sapiens (Human).